The sequence spans 511 residues: Putative CBL-interacting protein kinase 13 (511 aa).

Residues 25–279 (FEVGKLLGQG…AEGIMENEWF (255 aa)) form the Protein kinase domain. ATP contacts are provided by residues 31–39 (LGQGNFAKV) and Lys-54. The Proton acceptor role is filled by Asp-147. The interval 165 to 194 (DFGLSAVADGMRRDGLFHTFCGTPAYVAPE) is activation loop. Positions 307–340 (VDAPTSPPDTPRTVDSGDVGAAPTRPRKAGSLTS) are disordered. Positions 321 to 383 (DSGDVGAAPT…PGFDLSGLFD (63 aa)) constitute an NAF domain. The tract at residues 400–429 (KHTARFVSAAPVEVIVATLEAAAAAAGMAV) is PPI.

The protein belongs to the protein kinase superfamily. CAMK Ser/Thr protein kinase family. SNF1 subfamily. The cofactor is Mn(2+).

It carries out the reaction L-seryl-[protein] + ATP = O-phospho-L-seryl-[protein] + ADP + H(+). It catalyses the reaction L-threonyl-[protein] + ATP = O-phospho-L-threonyl-[protein] + ADP + H(+). Functionally, CIPK serine-threonine protein kinases interact with CBL proteins. Binding of a CBL protein to the regulatory NAF domain of CIPK protein lead to the activation of the kinase in a calcium-dependent manner. The sequence is that of Putative CBL-interacting protein kinase 13 (CIPK13) from Oryza sativa subsp. japonica (Rice).